A 35-amino-acid chain; its full sequence is Kappa-theraphotoxin-Tb1b (35 aa).

3 disulfides stabilise this stretch: C3-C18, C10-C23, and C17-C30.

This sequence belongs to the neurotoxin 10 (Hwtx-1) family. 58 subfamily. As to quaternary structure, monomer. Expressed by the venom gland.

The protein localises to the secreted. Its function is as follows. Low-affinity blocker of Kv4.2/KCND2 voltage-gated potassium channels. Is presumed to shift the voltage-dependence of channel activation to more depolarized potentials and to bind to the S3-S4 linker region of the voltage sensor domain. In Theraphosa blondi (Goliath birdeating spider), this protein is Kappa-theraphotoxin-Tb1b.